We begin with the raw amino-acid sequence, 172 residues long: MSDQQNTQQEDQPFFNIQRVYLKDMSLEQPNSPGIFLESEAPSVEVQVNVAASQLQEGIFEVVVTGTVTTKVQEKVAFLVEAHQAGIFDIRNVPVEQLDPLLGIACPTILYPYLRGNIADVITRAGFQAIHLSEINFQALYEQRLQAAMEEAQAAGGANSGIVMPDGSQARH.

Belongs to the SecB family. In terms of assembly, homotetramer, a dimer of dimers. One homotetramer interacts with 1 SecA dimer.

The protein resides in the cytoplasm. In terms of biological role, one of the proteins required for the normal export of preproteins out of the cell cytoplasm. It is a molecular chaperone that binds to a subset of precursor proteins, maintaining them in a translocation-competent state. It also specifically binds to its receptor SecA. This Cupriavidus pinatubonensis (strain JMP 134 / LMG 1197) (Cupriavidus necator (strain JMP 134)) protein is Protein-export protein SecB.